A 409-amino-acid polypeptide reads, in one-letter code: Transcriptional regulator GME11370 (409 aa).

Positions 17–44 (CHACAASKLKCSKEKPSCARCLKRNKPC) form a DNA-binding region, zn(2)-C6 fungal-type. Residues 49 to 83 (TRRAGRHHGSRSKKVPTISPASAPEPQPFSTTPPD) form a disordered region. Residues 51-62 (RAGRHHGSRSKK) are compositionally biased toward basic residues.

It is found in the nucleus. In terms of biological role, transcriptional regulator; part of the gene cluster that mediates the biosynthesis of dibenzodioxocinones such as pestalotiollide B, a novel class of inhibitors against cholesterol ester transfer protein (CEPT). The chain is Transcriptional regulator GME11370 from Pestalotiopsis microspora.